We begin with the raw amino-acid sequence, 739 residues long: Alcohol dehydrogenase (quinone), dehydrogenase subunit (739 aa).

Residues 1–35 (MISAVFGKRRSLSRTLTAGTICAALISGYATMASA) form the signal peptide. Pyrroloquinoline quinone is bound at residue Glu-97. A disulfide bond links Cys-143 and Cys-144. Residue Arg-149 participates in pyrroloquinoline quinone binding. Glu-217 serves as a coordination point for Ca(2+). Thr-279 provides a ligand contact to pyrroloquinoline quinone. 2 residues coordinate Ca(2+): Asn-299 and Asp-344. The Proton acceptor role is filled by Asp-344. The pyrroloquinoline quinone site is built by Lys-371 and Ile-585. The Cytochrome c domain occupies 635-739 (FDSKRTDNGY…NADGIPEQLP (105 aa)). Positions 651, 654, 655, and 694 each coordinate heme c.

This sequence belongs to the bacterial PQQ dehydrogenase family. As to quaternary structure, the alcohol dehydrogenase multicomponent enzyme system is composed of a dehydrogenase subunit I (AdhA) and a cytochrome c subunit II (AdhB). Requires pyrroloquinoline quinone as cofactor. The cofactor is Ca(2+). Heme c is required as a cofactor.

The protein resides in the cell membrane. The catalysed reaction is ethanol + a ubiquinone = a ubiquinol + acetaldehyde. Its function is as follows. Dehydrogenase component of the alcohol dehydrogenase multicomponent enzyme system which is involved in the production of acetic acid and in the ethanol oxidase respiratory chain. Quinohemoprotein alcohol dehydrogenase (ADH) catalyzes the oxidation of ethanol to acetaldehyde by transferring electrons to the ubiquinone embedded in the membrane phospholipids. The electrons transfer from ethanol to membranous ubiquinone occurs from pyrroloquinoline quinone (PQQ) to one heme c in subunit I (AdhA), and finally to two heme c in subunit II (AdhB). Besides ubiquinone reduction, ADH also has a ubiquinol (QH2) oxidation reaction which mediates electron transfer from ubiquinol to the non-energy generating bypass oxidase system. The electrons transfer occurs from ubiquinol (QH2) to the additional heme c within subunit II (AdhB). This chain is Alcohol dehydrogenase (quinone), dehydrogenase subunit, found in Komagataeibacter europaeus (Gluconacetobacter europaeus).